The sequence spans 212 residues: Inner membrane-spanning protein YciB (212 aa).

6 helical membrane passes run F19–L39, A47–L67, A82–W102, T105–G122, L147–F167, and L177–L197.

Belongs to the YciB family.

Its subcellular location is the cell inner membrane. In terms of biological role, plays a role in cell envelope biogenesis, maintenance of cell envelope integrity and membrane homeostasis. This Thioalkalivibrio sulfidiphilus (strain HL-EbGR7) protein is Inner membrane-spanning protein YciB.